We begin with the raw amino-acid sequence, 405 residues long: Histidine decarboxylase (405 aa).

Position 121 (His-121) interacts with substrate. The residue at position 234 (Lys-234) is an N6-(pyridoxal phosphate)lysine.

It belongs to the group II decarboxylase family. In terms of assembly, homotetramer. Pyridoxal 5'-phosphate is required as a cofactor.

The enzyme catalyses L-histidine + H(+) = histamine + CO2. The protein operates within siderophore biosynthesis; pseudomonine biosynthesis. The protein is Histidine decarboxylase of Pseudomonas fluorescens.